Consider the following 935-residue polypeptide: Protocadherin gamma-A11 (935 aa).

An N-terminal signal peptide occupies residues 1-29 (MANRLQRGDRSRLLLLLCIFLGTLRGFRA). Cadherin domains lie at 30-134 (RQIR…APSF), 135-243 (QEDE…IPMF), 244-348 (TQSV…APEI), 349-453 (TITS…PPVF), 454-563 (PHSS…APEI), and 571-677 (DGST…ADLG). The Extracellular segment spans residues 30–693 (RQIRYSVPEE…NSEASDLSLY (664 aa)). Residue asparagine 48 is glycosylated (N-linked (GlcNAc...) asparagine). N-linked (GlcNAc...) asparagine glycosylation is found at asparagine 255, asparagine 266, asparagine 420, and asparagine 546. A helical membrane pass occupies residues 694 to 714 (LVVAVAAVSCIFLVFVIVLLA). Topologically, residues 715–935 (LRLWRWHKSR…KKKSGKKEKK (221 aa)) are cytoplasmic. Disordered regions lie at residues 805–844 (CDPT…WPNN) and 905–935 (ATLT…KEKK). The span at 807 to 844 (PTSNQQAPPNTDWRFSQAQRPGTSGSQNGDDTGTWPNN) shows a compositional bias: polar residues. The span at 925–935 (NKKKSGKKEKK) shows a compositional bias: basic residues.

It is found in the cell membrane. Its function is as follows. Potential calcium-dependent cell-adhesion protein. May be involved in the establishment and maintenance of specific neuronal connections in the brain. The sequence is that of Protocadherin gamma-A11 (PCDHGA11) from Pan troglodytes (Chimpanzee).